The chain runs to 1020 residues: Sodium/potassium-transporting ATPase subunit alpha-2 (1020 aa).

The propeptide occupies 1–5; it reads MGRGA. The disordered stretch occupies residues 1–31; sequence MGRGAGREYSPAATTAENGGGKKKQKEKELD. The Cytoplasmic portion of the chain corresponds to 6–85; it reads GREYSPAATT…NALTPPPTTP (80 aa). The residue at position 10 (Ser10) is a Phosphoserine. The segment at 80–82 is interaction with phosphoinositide-3 kinase; sequence PPP. The helical transmembrane segment at 86–106 threads the bilayer; that stretch reads EWVKFCRQLFGGFSILLWIGA. Topologically, residues 107–129 are extracellular; sequence LLCFLAYGILAAMEDEPSNDNLY. The chain crosses the membrane as a helical span at residues 130–150; the sequence is LGIVLAAVVIVTGCFSYYQEA. Over 151–286 the chain is Cytoplasmic; that stretch reads KSSKIMDSFK…VGQTPIAMEI (136 aa). Over residues 212-227 the composition is skewed to polar residues; it reads DNSSLTGESEPQTRSP. Residues 212–231 are disordered; the sequence is DNSSLTGESEPQTRSPEFTH. Residues 287–306 traverse the membrane as a helical segment; that stretch reads EHFIQLITGVAVFLGVSFFV. The Extracellular portion of the chain corresponds to 307–318; sequence LSLILGYSWLEA. The helical transmembrane segment at 319–336 threads the bilayer; it reads VIFLIGIIVANVPEGLLA. The Cytoplasmic portion of the chain corresponds to 337 to 769; sequence TVTVCLTLTA…EEGRLIFDNL (433 aa). Asp374 (4-aspartylphosphate intermediate) is an active-site residue. Ser439, Ser450, Ser496, and Ser559 each carry phosphoserine. Thr570 carries the post-translational modification Phosphothreonine. Ser587 and Ser672 each carry phosphoserine. Residues Asp714 and Asp718 each coordinate Mg(2+). Residues 770–789 form a helical membrane-spanning segment; that stretch reads KKSIAYTLTSNIPEITPFLL. Residues 790–799 are Extracellular-facing; that stretch reads FIIANIPLPL. Residues 800 to 820 traverse the membrane as a helical segment; the sequence is GTVTILCIDLGTDMVPAISLA. The Cytoplasmic segment spans residues 821 to 840; the sequence is YEAAESDIMKRQPRNSQTDK. A Phosphoserine modification is found at Ser826. A helical transmembrane segment spans residues 841–863; it reads LVNERLISMAYGQIGMIQALGGF. At 864 to 915 the chain is on the extracellular side; that stretch reads FTYFVILAENGFLPSRLLGIRLDWDDRTTNDLEDSYGQEWTYEQRKVVEFTC. The chain crosses the membrane as a helical span at residues 916–935; sequence HTAFFASIVVVQWADLIICK. At 936 to 948 the chain is on the cytoplasmic side; that stretch reads TRRNSVFQQGMKN. Residue Ser940 is modified to Phosphoserine; by PKA. The helical transmembrane segment at 949-967 threads the bilayer; that stretch reads KILIFGLLEETALAAFLSY. Topologically, residues 968-982 are extracellular; sequence CPGMGVALRMYPLKV. Residues 983 to 1003 traverse the membrane as a helical segment; the sequence is TWWFCAFPYSLLIFIYDEVRK. Residues 1004 to 1020 are Cytoplasmic-facing; sequence LILRRYPGGWVEKETYY.

It belongs to the cation transport ATPase (P-type) (TC 3.A.3) family. Type IIC subfamily. The sodium/potassium-transporting ATPase is composed of a catalytic alpha subunit, an auxiliary non-catalytic beta subunit and an additional regulatory subunit. Interacts with regulatory subunit FXYD1.

The protein resides in the membrane. It localises to the cell membrane. The catalysed reaction is K(+)(out) + Na(+)(in) + ATP + H2O = K(+)(in) + Na(+)(out) + ADP + phosphate + H(+). Functionally, this is the catalytic component of the active enzyme, which catalyzes the hydrolysis of ATP coupled with the exchange of sodium and potassium ions across the plasma membrane. This action creates the electrochemical gradient of sodium and potassium ions, providing the energy for active transport of various nutrients. This Mus musculus (Mouse) protein is Sodium/potassium-transporting ATPase subunit alpha-2 (Atp1a2).